The primary structure comprises 1029 residues: Tyrosine-protein kinase-like otk (1029 aa).

Residues 1-18 (MISIYGLVMALMMASVLA) form the signal peptide. The Extracellular segment spans residues 19 to 577 (SSSRFQRVPQ…GGDGFLVTRA (559 aa)). Ig-like C2-type domains lie at 21-104 (SRFQ…REAS), 105-195 (PPAK…RVMS), 247-361 (PEDL…APIS), 364-459 (PGIL…VAIN), and 464-554 (PKFS…VQLV). An N-linked (GlcNAc...) asparagine glycan is attached at N35. Intrachain disulfides connect C42–C91, C133–C184, C272–C350, and C395–C443. N-linked (GlcNAc...) asparagine glycans are attached at residues N332, N413, N425, N440, N453, N508, and N520. C486 and C538 form a disulfide bridge. Residues 578 to 598 (VLITMTVALAYIVLVVGLMLW) traverse the membrane as a helical segment. Topologically, residues 599-1029 (CRYRRQARKA…LSKAMQIAEK (431 aa)) are cytoplasmic. Disordered regions lie at residues 613-675 (LSTK…KKSA) and 714-756 (SPSD…KTSM). Residues 651 to 669 (KSSGDAQKSDDTACSQQSR) show a composition bias toward polar residues. S674 is modified (phosphoserine). In terms of domain architecture, Protein kinase; inactive spans 688–1024 (LSELIQIGRG…QLGAALSKAM (337 aa)). Residues 716–727 (SDKDADTEKQHS) are compositionally biased toward basic and acidic residues.

The protein belongs to the protein kinase superfamily. Tyr protein kinase family. Insulin receptor subfamily. In terms of assembly, interacts with plexA; component of a receptor complex that mediates the repulsive signaling in response to Semaphorin ligands.

The protein resides in the cell membrane. Its function is as follows. Acts as a calcium-dependent, homophilic cell adhesion molecule that regulates neural recognition during the development of the nervous system. Component of the repulsive Plexin signaling response to regulate motor axon guidance at the embryonic stage. Also component of a receptor complex that is required in the adult visual system to innervate the lamina layer; specific targeting of R1-R6 axons. This chain is Tyrosine-protein kinase-like otk, found in Drosophila sechellia (Fruit fly).